The chain runs to 620 residues: Coenzyme F420-dependent sulfite reductase (620 aa).

One can recognise a 4Fe-4S ferredoxin-type 1 domain in the interval 6 to 35; the sequence is LNEIVDSGVCARCGTCTIVCPNGILTFDER. Residues cysteine 15, cysteine 18, cysteine 21, cysteine 25, cysteine 428, cysteine 434, cysteine 468, cysteine 472, cysteine 495, cysteine 498, cysteine 501, cysteine 505, cysteine 524, cysteine 527, cysteine 530, and cysteine 534 each coordinate [4Fe-4S] cluster. Cysteine 472 contributes to the siroheme binding site. 2 consecutive 4Fe-4S ferredoxin-type domains span residues 486-515 and 520-544; these read KYPK…IRGE and NYNV…VKEE.

It belongs to the nitrite and sulfite reductase 4Fe-4S domain family. [4Fe-4S] cluster serves as cofactor. Requires siroheme as cofactor.

It carries out the reaction 3 oxidized coenzyme F420-(gamma-L-Glu)(n) + hydrogen sulfide + 3 H2O + 2 H(+) = 3 reduced coenzyme F420-(gamma-L-Glu)(n) + sulfite. Its function is as follows. Catalyzes the reduction of sulfite to sulfide using reduced F420 as the electron source. Involved in sulfite detoxification and assimilation. Cannot use NADH or NADPH. The chain is Coenzyme F420-dependent sulfite reductase from Methanocaldococcus jannaschii (strain ATCC 43067 / DSM 2661 / JAL-1 / JCM 10045 / NBRC 100440) (Methanococcus jannaschii).